The sequence spans 320 residues: Glycerol-3-phosphate dehydrogenase [NAD(P)+] (320 aa).

NADPH-binding residues include phenylalanine 11, arginine 30, and lysine 102. 3 residues coordinate sn-glycerol 3-phosphate: lysine 102, glycine 130, and serine 132. Residue alanine 134 participates in NADPH binding. Lysine 185, aspartate 238, serine 248, arginine 249, and asparagine 250 together coordinate sn-glycerol 3-phosphate. Lysine 185 functions as the Proton acceptor in the catalytic mechanism. NADPH is bound at residue arginine 249. Glutamate 270 is an NADPH binding site.

This sequence belongs to the NAD-dependent glycerol-3-phosphate dehydrogenase family.

The protein localises to the cytoplasm. The enzyme catalyses sn-glycerol 3-phosphate + NAD(+) = dihydroxyacetone phosphate + NADH + H(+). It carries out the reaction sn-glycerol 3-phosphate + NADP(+) = dihydroxyacetone phosphate + NADPH + H(+). Its pathway is membrane lipid metabolism; glycerophospholipid metabolism. Catalyzes the reduction of the glycolytic intermediate dihydroxyacetone phosphate (DHAP) to sn-glycerol 3-phosphate (G3P), the key precursor for phospholipid synthesis. This chain is Glycerol-3-phosphate dehydrogenase [NAD(P)+], found in Roseobacter denitrificans (strain ATCC 33942 / OCh 114) (Erythrobacter sp. (strain OCh 114)).